Here is a 221-residue protein sequence, read N- to C-terminus: Phosphatidylserine decarboxylase proenzyme (221 aa).

The active-site Schiff-base intermediate with substrate; via pyruvic acid is S189. Pyruvic acid (Ser); by autocatalysis is present on S189.

The protein belongs to the phosphatidylserine decarboxylase family. PSD-A subfamily. In terms of assembly, heterodimer of a large membrane-associated beta subunit and a small pyruvoyl-containing alpha subunit. It depends on pyruvate as a cofactor. Is synthesized initially as an inactive proenzyme. Formation of the active enzyme involves a self-maturation process in which the active site pyruvoyl group is generated from an internal serine residue via an autocatalytic post-translational modification. Two non-identical subunits are generated from the proenzyme in this reaction, and the pyruvate is formed at the N-terminus of the alpha chain, which is derived from the carboxyl end of the proenzyme. The post-translation cleavage follows an unusual pathway, termed non-hydrolytic serinolysis, in which the side chain hydroxyl group of the serine supplies its oxygen atom to form the C-terminus of the beta chain, while the remainder of the serine residue undergoes an oxidative deamination to produce ammonia and the pyruvoyl prosthetic group on the alpha chain.

It is found in the cell membrane. The enzyme catalyses a 1,2-diacyl-sn-glycero-3-phospho-L-serine + H(+) = a 1,2-diacyl-sn-glycero-3-phosphoethanolamine + CO2. It participates in phospholipid metabolism; phosphatidylethanolamine biosynthesis; phosphatidylethanolamine from CDP-diacylglycerol: step 2/2. Its function is as follows. Catalyzes the formation of phosphatidylethanolamine (PtdEtn) from phosphatidylserine (PtdSer). In Porphyromonas gingivalis (strain ATCC 33277 / DSM 20709 / CIP 103683 / JCM 12257 / NCTC 11834 / 2561), this protein is Phosphatidylserine decarboxylase proenzyme.